Reading from the N-terminus, the 239-residue chain is Tetraspanin-9 (239 aa).

The Cytoplasmic portion of the chain corresponds to 1–13; that stretch reads MARGCLCCLKYMM. The chain crosses the membrane as a helical span at residues 14–34; that stretch reads FLFNLIFWLCGCGLLGVGIWL. At 35–55 the chain is on the extracellular side; it reads SVSQGNFATFSPSFPSLSAAN. Residues 56-76 form a helical membrane-spanning segment; sequence LVIAIGTIVMVTGFLGCLGAI. Topologically, residues 77 to 85 are cytoplasmic; sequence KENKCLLLS. Residues 86-106 form a helical membrane-spanning segment; that stretch reads FFIVLLVILLAELILLILFFV. The Extracellular segment spans residues 107-203; it reads YMDKVNENAK…VKMWFDDNKH (97 aa). N180 carries an N-linked (GlcNAc...) asparagine glycan. A helical membrane pass occupies residues 204-224; the sequence is VLGTVGMCILIMQILGMAFSM. Over 225-239 the chain is Cytoplasmic; the sequence is TLFQHIHRTGKKYDA.

It belongs to the tetraspanin (TM4SF) family. Found in a complex with GP6. Post-translationally, glycosylated. As to expression, expressed in megakaryocytes and platelets (at protein level).

It localises to the membrane. In Homo sapiens (Human), this protein is Tetraspanin-9 (TSPAN9).